Consider the following 195-residue polypeptide: Imidazoleglycerol-phosphate dehydratase (195 aa).

This sequence belongs to the imidazoleglycerol-phosphate dehydratase family.

It localises to the cytoplasm. The catalysed reaction is D-erythro-1-(imidazol-4-yl)glycerol 3-phosphate = 3-(imidazol-4-yl)-2-oxopropyl phosphate + H2O. It participates in amino-acid biosynthesis; L-histidine biosynthesis; L-histidine from 5-phospho-alpha-D-ribose 1-diphosphate: step 6/9. The chain is Imidazoleglycerol-phosphate dehydratase from Azoarcus sp. (strain BH72).